Here is a 162-residue protein sequence, read N- to C-terminus: HTH-type transcriptional regulator IscR (162 aa).

An HTH rrf2-type domain is found at 2–131 (RLTSKGRYAV…NNITLGELVN (130 aa)). The segment at residues 28-51 (LADISERQGISLSYLEQLFSRLRK) is a DNA-binding region (H-T-H motif). [2Fe-2S] cluster is bound by residues Cys-92, Cys-98, and Cys-104.

Requires [2Fe-2S] cluster as cofactor.

Its function is as follows. Regulates the transcription of several operons and genes involved in the biogenesis of Fe-S clusters and Fe-S-containing proteins. In Shigella sonnei (strain Ss046), this protein is HTH-type transcriptional regulator IscR.